A 465-amino-acid chain; its full sequence is MNVTSLFSFTSPAVKRLLGWKQGDEEEKWAEKAVDALVKKLKKKKGAMEELEKALSCPGQPSNCVTIPRSLDGRLQVSHRKGLPHVIYCRVWRWPDLQSHHELKPLECCEFPFGSKQKEVCINPYHYKRVESPVLPPVLVPRHSEYNPQHSLLAQFRNLGQNEPHMPHNATFPDSFQQPNSHPFPHSPNSSYPNSPGSSSSTYPHSPASSDPGSPFQMPADTPPPAYLPPEDQMTHDTSQPMDTNMMAPGIHPDIHRGDVQAVAYEEPKHWCSIVYYELNNRVGEAFHASSTSILVDGFTDPSNNKNRFCLGLLSNVNRNSTIENTRRHIGKGVHLYYVGGEVYAECLSDSSIFVQSRNCNYHHGFHPTTVCKIPSGCSLKIFNNQEFAQLLAQSVNHGFETVYELTKMCTLRMSFVKGWGAEYHRQDVTSTPCWIEIHLHGPLQWLDKVLTQMGSPHNPISSVS.

The MH1 domain occupies proline 12–proline 136. Residues cysteine 64, cysteine 109, cysteine 121, and histidine 126 each contribute to the Zn(2+) site. The interval glutamine 161–glutamine 240 is disordered. Residues proline 179 to serine 210 show a composition bias toward low complexity. In terms of domain architecture, MH2 spans tryptophan 271–serine 465. Serine 463 and serine 465 each carry phosphoserine.

The protein belongs to the dwarfin/SMAD family. Found in a complex with SMAD4 and YY1. Interacts with HGS, NANOG and ZCCHC12. Upon C-terminus phosphorylation: forms trimers with another SMAD1 and the co-SMAD SMAD4. Interacts with PEBP2-alpha subunit, CREB-binding protein (CBP), p300, SMURF1, SMURF2, USP15 and HOXC8. Associates with ZNF423 or ZNF521 in response to BMP2 leading to activate transcription of BMP target genes. Interacts with SKOR1. Interacts (via MH2 domain) with LEMD3. Binding to LEMD3 results in at least a partial reduction of receptor-mediated phosphorylation. Forms a ternary complex with PSMB4 and OAZ1 before PSMB4 is incorporated into the 20S proteasome. Found in a macromolecular complex with FAM83G. Interacts (via MH2 domain) with FAM83G (via MH2 domain); in a SMAD4-independent manner. Interacts with ZC3H3. Interacts with TMEM119. Interacts (via MH1 and MH2 domains) with ZNF8. Interacts with RANBP3L; the interaction increases when SMAD1 is not phosphorylated and mediates SMAD1 nuclear export. Interacts with EGR1; this interaction inhibits SMAD1 dephosphorylation. Interacts with SMAD6. Interacts with YAP1. Post-translationally, phosphorylation of the C-terminal SVS motif by BMP type 1 receptor kinase activates SMAD1 by promoting dissociation from the receptor and trimerization with SMAD4. Phosphorylation by ERK2 MAP kinase in response to EGF or HGF prevents SMAD1 nuclear accumulation and transcriptional activity in response to BMP. Dephosphorylation, probably by PPM1A, induces its export from the nucleus to the cytoplasm. Dephosphorylation is inhibited by association with EGR1. Phosphorylation by CDK8/9 creates binding sites for YAP1, and subsequent phosphorylation by GSK3 switches off YAP1 binding and adds binding sites for SMURF1. Ubiquitinated by SMAD-specific E3 ubiquitin ligase SMURF1, leading to its degradation. Monoubiquitinated, leading to prevent DNA-binding. Deubiquitination by USP15 alleviates inhibition and promotes activation of TGF-beta target genes. Dephosphorylation, probably by PPM1A, induces its export from the nucleus to the cytoplasm. Phospho-SMAD1 is ubiquitinated by CHIP leading to disruption of the SMAD1-SMAD4 complex.

The protein localises to the cytoplasm. Its subcellular location is the nucleus. Transcriptional modulator that plays a role in various cellular processes, including embryonic development, cell differentiation, and tissue homeostasis. Upon BMP ligand binding to their receptors at the cell surface, is phosphorylated by activated type I BMP receptors (BMPRIs) and associates with SMAD4 to form an heteromeric complex which translocates into the nucleus acting as transcription factor. In turn, the hetero-trimeric complex recognizes cis-regulatory elements containing Smad Binding Elements (SBEs) to modulate the outcome of the signaling network. SMAD1/OAZ1/PSMB4 complex mediates the degradation of the CREBBP/EP300 repressor SNIP1. The chain is Mothers against decapentaplegic homolog 1 (SMAD1) from Coturnix japonica (Japanese quail).